The following is a 236-amino-acid chain: Phosphoribosylaminoimidazole-succinocarboxamide synthase (236 aa).

It belongs to the SAICAR synthetase family.

The enzyme catalyses 5-amino-1-(5-phospho-D-ribosyl)imidazole-4-carboxylate + L-aspartate + ATP = (2S)-2-[5-amino-1-(5-phospho-beta-D-ribosyl)imidazole-4-carboxamido]succinate + ADP + phosphate + 2 H(+). It functions in the pathway purine metabolism; IMP biosynthesis via de novo pathway; 5-amino-1-(5-phospho-D-ribosyl)imidazole-4-carboxamide from 5-amino-1-(5-phospho-D-ribosyl)imidazole-4-carboxylate: step 1/2. The sequence is that of Phosphoribosylaminoimidazole-succinocarboxamide synthase from Rickettsia typhi (strain ATCC VR-144 / Wilmington).